We begin with the raw amino-acid sequence, 408 residues long: LL-diaminopimelate aminotransferase (408 aa).

Residues tyrosine 15 and glycine 42 each contribute to the substrate site. Residues tyrosine 72, 108–109, tyrosine 132, asparagine 187, tyrosine 218, and 246–248 each bind pyridoxal 5'-phosphate; these read SK and SFS. 3 residues coordinate substrate: lysine 109, tyrosine 132, and asparagine 187. An N6-(pyridoxal phosphate)lysine modification is found at lysine 249. Pyridoxal 5'-phosphate contacts are provided by arginine 257 and asparagine 291. Substrate is bound by residues asparagine 291 and arginine 387.

Belongs to the class-I pyridoxal-phosphate-dependent aminotransferase family. LL-diaminopimelate aminotransferase subfamily. Homodimer. The cofactor is pyridoxal 5'-phosphate.

The enzyme catalyses (2S,6S)-2,6-diaminopimelate + 2-oxoglutarate = (S)-2,3,4,5-tetrahydrodipicolinate + L-glutamate + H2O + H(+). Its pathway is amino-acid biosynthesis; L-lysine biosynthesis via DAP pathway; LL-2,6-diaminopimelate from (S)-tetrahydrodipicolinate (aminotransferase route): step 1/1. Involved in the synthesis of meso-diaminopimelate (m-DAP or DL-DAP), required for both lysine and peptidoglycan biosynthesis. Catalyzes the direct conversion of tetrahydrodipicolinate to LL-diaminopimelate. In Prochlorococcus marinus (strain NATL1A), this protein is LL-diaminopimelate aminotransferase.